The following is a 2703-amino-acid chain: Neurogenic locus Notch protein (2703 aa).

Positions 1 to 52 are cleaved as a signal peptide; sequence MQSQRSRRRSRAPNTWICFWINKMHAVASLPASLPLLLLTLAFANLPNTVRG. Topologically, residues 53 to 1745 are extracellular; the sequence is TDTALVAASC…NGEPPANVKY (1693 aa). EGF-like domains are found at residues 58-95, 96-136, 139-176, and 177-215; these read VAASCTSVGCQNGGTCVTQLNGKTYCACDSHYVGDYCE, HRNP…SLCE, VPNACDHVTCLNGGTCQLKTLEEYTCACANGYTGERCE, and TKNLCASSPCRNGATCTALAGSSSFTCSCPPGFTGDTCS. Cystine bridges form between Cys-62–Cys-73, Cys-67–Cys-83, Cys-85–Cys-94, Cys-100–Cys-111, Cys-105–Cys-124, Cys-126–Cys-135, Cys-143–Cys-154, Cys-148–Cys-164, Cys-166–Cys-175, Cys-181–Cys-192, Cys-186–Cys-203, Cys-205–Cys-214, Cys-221–Cys-232, Cys-226–Cys-241, Cys-243–Cys-252, Cys-259–Cys-270, Cys-264–Cys-279, Cys-281–Cys-290, Cys-297–Cys-308, Cys-302–Cys-317, Cys-319–Cys-328, Cys-335–Cys-349, Cys-343–Cys-358, and Cys-360–Cys-369. Residue Thr-72 is glycosylated (O-linked (Fuc...) threonine). O-linked (Fuc...) threonine glycosylation is present at Thr-110. The O-linked (Fuc...) threonine glycan is linked to Thr-153. An O-linked (Glc...) serine glycan is attached at Ser-183. Residue Thr-191 is glycosylated (O-linked (Fuc...) threonine). O-linked (GlcNAc...) threonine glycosylation is present at Thr-210. Residues 217–253 form the EGF-like 5; calcium-binding domain; that stretch reads DIEECQSNPCKYGGTCVNTHGSYQCMCPTGYTGKDCD. An O-linked (Glc...) serine glycan is attached at Ser-223. An O-linked (Fuc...) threonine glycan is attached at Thr-231. The EGF-like 6 domain maps to 255–291; the sequence is KYKPCSPSPCQNGGICRSNGLSYECKCPKGFEGKNCE. An EGF-like 7; calcium-binding domain is found at 293–329; that stretch reads NYDDCLGHLCQNGGTCIDGISDYTCRCPPNFTGRFCQ. O-linked (Fuc...) threonine glycosylation occurs at Thr-307. A glycan (N-linked (GlcNAc...) asparagine) is linked at Asn-322. In terms of domain architecture, EGF-like 8; calcium-binding spans 331–370; the sequence is DVDECAQRDHPVCQNGATCTNTHGSYSCICVNGWAGLDCS. A glycan (O-linked (Fuc...) threonine) is linked at Thr-348. N-linked (GlcNAc...) asparagine glycosylation is present at Asn-371. An EGF-like 9; calcium-binding domain is found at 372–408; it reads NTDDCKQAACFYGATCIDGVGSFYCQCTKGKTGLLCH. 8 disulfide bridges follow: Cys-376-Cys-387, Cys-381-Cys-396, Cys-398-Cys-407, Cys-413-Cys-424, Cys-418-Cys-435, Cys-437-Cys-446, Cys-453-Cys-465, and Cys-459-Cys-474. A glycan (O-linked (Fuc...) threonine) is linked at Thr-386. One can recognise an EGF-like 10 domain in the interval 409 to 447; it reads LDDACTSNPCHADAICDTSPINGSYACSCATGYKGVDCS. A glycan (O-linked (Glc...) serine) is linked at Ser-427. The N-linked (GlcNAc...) asparagine glycan is linked to Asn-430. An EGF-like 11; calcium-binding domain is found at 449-486; it reads DIDECDQGSPCEHNGICVNTPGSYRCNCSQGFTGPRCE. Asn-475 is a glycosylation site (N-linked (GlcNAc...) asparagine). 78 disulfides stabilise this stretch: Cys-476-Cys-485, Cys-492-Cys-503, Cys-497-Cys-512, Cys-514-Cys-523, Cys-530-Cys-541, Cys-535-Cys-550, Cys-552-Cys-561, Cys-568-Cys-579, Cys-573-Cys-588, Cys-590-Cys-599, Cys-606-Cys-616, Cys-611-Cys-625, Cys-627-Cys-636, Cys-643-Cys-654, Cys-648-Cys-663, Cys-665-Cys-674, Cys-681-Cys-692, Cys-686-Cys-701, Cys-703-Cys-712, Cys-719-Cys-730, Cys-724-Cys-739, Cys-741-Cys-750, Cys-757-Cys-768, Cys-762-Cys-777, Cys-779-Cys-788, Cys-795-Cys-806, Cys-800-Cys-815, Cys-817-Cys-826, Cys-833-Cys-844, Cys-838-Cys-853, Cys-855-Cys-864, Cys-871-Cys-882, Cys-876-Cys-893, Cys-895-Cys-904, Cys-911-Cys-923, Cys-917-Cys-932, Cys-934-Cys-943, Cys-950-Cys-961, Cys-955-Cys-970, Cys-972-Cys-981, Cys-988-Cys-999, Cys-993-Cys-1008, Cys-1010-Cys-1019, Cys-1026-Cys-1037, Cys-1031-Cys-1046, Cys-1048-Cys-1057, Cys-1064-Cys-1075, Cys-1069-Cys-1084, Cys-1086-Cys-1095, Cys-1102-Cys-1113, Cys-1107-Cys-1122, Cys-1124-Cys-1133, Cys-1155-Cys-1160, Cys-1171-Cys-1180, Cys-1187-Cys-1198, Cys-1192-Cys-1207, Cys-1209-Cys-1218, Cys-1225-Cys-1236, Cys-1230-Cys-1245, Cys-1247-Cys-1256, Cys-1263-Cys-1274, Cys-1268-Cys-1283, Cys-1285-Cys-1294, Cys-1301-Cys-1314, Cys-1306-Cys-1323, Cys-1325-Cys-1334, Cys-1341-Cys-1352, Cys-1346-Cys-1361, Cys-1363-Cys-1372, Cys-1379-Cys-1389, Cys-1384-Cys-1400, Cys-1402-Cys-1411, Cys-1419-Cys-1430, Cys-1424-Cys-1439, Cys-1441-Cys-1450, Cys-1482-Cys-1505, Cys-1487-Cys-1500, and Cys-1496-Cys-1512. Thr-481 is a glycosylation site (O-linked (GlcNAc...) threonine). The EGF-like 12; calcium-binding domain maps to 488 to 524; that stretch reads NINECESHPCQNEGSCLDDPGTFRCVCMPGFTGTQCE. The O-linked (Glc...) serine glycan is linked to Ser-494. Ser-502 is a glycosylation site (O-linked (Fuc...) serine). A glycan (O-linked (GlcNAc...) threonine) is linked at Thr-519. The EGF-like 13; calcium-binding domain maps to 526-562; it reads DIDECQSNPCLNDGTCHDKINGFKCSCALGFTGARCQ. A glycan (O-linked (Glc...) serine) is linked at Ser-532. Positions 564–600 constitute an EGF-like 14; calcium-binding domain; sequence NIDDCQSQPCRNRGICHDSIAGYSCECPPGYTGTSCE. O-linked (Glc...) serine glycosylation is present at Ser-570. The O-linked (GlcNAc...) threonine glycan is linked to Thr-595. The EGF-like 15; calcium-binding domain maps to 602–637; the sequence is NINDCDSNPCHRGKCIDDVNSFKCLCDPGYTGYICQ. The O-linked (Glc...) serine glycan is linked to Ser-608. The EGF-like 16; calcium-binding domain maps to 639–675; the sequence is QINECESNPCQFDGHCQDRVGSYYCQCQAGTSGKNCE. Ser-645 is a glycosylation site (O-linked (Glc...) serine). The 37-residue stretch at 677-713 folds into the EGF-like 17; calcium-binding domain; the sequence is NVNECHSNPCNNGATCIDGINSYKCQCVPGFTGQHCE. Residue Ser-683 is glycosylated (O-linked (Glc...) serine). The O-linked (Fuc...) threonine glycan is linked to Thr-691. One can recognise an EGF-like 18; calcium-binding domain in the interval 715–751; sequence NVDECISSPCANNGVCIDQVNGYKCECPRGFYDAHCL. Ser-721 is a glycosylation site (O-linked (Glc...) serine). The EGF-like 19; calcium-binding domain maps to 753–789; the sequence is DVDECASNPCVNEGRCEDGINEFICHCPPGYTGKRCE. Ser-759 is a glycosylation site (O-linked (Glc...) serine). An EGF-like 20; calcium-binding domain is found at 791 to 827; the sequence is DIDECSSNPCQHGGTCYDKLNAFSCQCMPGYTGQKCE. O-linked (Glc...) serine glycosylation is present at Ser-797. An O-linked (Fuc...) threonine glycan is attached at Thr-805. A glycan (O-linked (GlcNAc...) threonine) is linked at Thr-822. The EGF-like 21; calcium-binding domain maps to 829–865; it reads NIDDCVTNPCGNGGTCIDKVNGYKCVCKVPFTGRDCE. An O-linked (Fuc...) threonine glycan is attached at Thr-843. An EGF-like 22 domain is found at 867 to 905; that stretch reads KMDPCASNRCKNEAKCTPSSNFLDFSCTCKLGYTGRYCD. The region spanning 907-944 is the EGF-like 23; calcium-binding domain; it reads DIDECSLSSPCRNGASCLNVPGSYRCLCTKGYEGRDCA. An O-linked (Fuc...) serine glycan is attached at Ser-922. The EGF-like 24; calcium-binding domain maps to 946 to 982; sequence NTDDCASFPCQNGGTCLDGIGDYSCLCVDGFDGKHCE. O-linked (Glc...) serine glycosylation occurs at Ser-952. O-linked (Fuc...) threonine glycosylation is present at Thr-960. In terms of domain architecture, EGF-like 25 spans 984 to 1020; sequence DINECLSQPCQNGATCSQYVNSYTCTCPLGFSGINCQ. O-linked (Glc...) serine glycosylation occurs at Ser-990. Thr-998 carries O-linked (Fuc...) threonine glycosylation. The region spanning 1022–1058 is the EGF-like 26; calcium-binding domain; the sequence is NDEDCTESSCLNGGSCIDGINGYNCSCLAGYSGANCQ. Ser-1036 carries an O-linked (Fuc...) serine glycan. The N-linked (GlcNAc...) asparagine glycan is linked to Asn-1045. EGF-like domains lie at 1060–1096, 1098–1134, and 1136–1181; these read KLNKCDSNPCLNGATCHEQNNEYTCHCPSGFTGKQCS, YVDWCGQSPCENGATCSQMKHQFSCKCSAGWTGKLCD, and QTIS…SYCQ. An O-linked (Glc...) serine glycan is attached at Ser-1066. A glycan (O-linked (Fuc...) threonine) is linked at Thr-1074. O-linked (Fuc...) threonine glycosylation occurs at Thr-1112. N-linked (GlcNAc...) asparagine glycosylation is present at Asn-1157. The EGF-like 30; calcium-binding domain occupies 1183–1219; that stretch reads EIDECQSQPCQNGGTCRDLIGAYECQCRQGFQGQNCE. Ser-1189 carries O-linked (Glc...) serine glycosylation. The O-linked (Fuc...) threonine glycan is linked to Thr-1197. Positions 1221 to 1257 constitute an EGF-like 31; calcium-binding domain; sequence NIDDCAPNPCQNGGTCHDRVMNFSCSCPPGTMGIICE. The O-linked (Fuc...) threonine glycan is linked to Thr-1235. Asn-1242 is a glycosylation site (N-linked (GlcNAc...) asparagine). The EGF-like 32; calcium-binding domain occupies 1259 to 1295; it reads NKDDCKPGACHNNGSCIDRVGGFECVCQPGFVGARCE. A glycan (N-linked (GlcNAc...) asparagine) is linked at Asn-1271. Ser-1273 carries O-linked (Fuc...) serine glycosylation. 4 consecutive EGF-like domains span residues 1297 to 1335, 1337 to 1373, 1375 to 1412, and 1415 to 1451; these read DINECLSNPCSNAGTLDCVQLVNNYHCNCRPGHMGRHCE, KVDFCAQSPCQNGGNCNIRQSGHHCICNNGFYGKNCE, SGQDCDSNPCRVGNCVVADEGFGYRCECPRGTLGEHCE, and TLDECSPNPCAQGAACEDLLGDYECLCPSKWKGKRCD. The O-linked (Glc...) serine glycan is linked to Ser-1303. O-linked (Glc...) serine glycosylation occurs at Ser-1381. LNR repeat units follow at residues 1482 to 1521, 1522 to 1557, and 1559 to 1599; these read CDKRGCTEKQGNGICDSDCNTYACNFDGNDCSLGINPWAN, CTANECWNKFKNGKCNEECNNAACHYDGHDCERKLK, and CDSL…TQSP. A glycan (N-linked (GlcNAc...) asparagine) is linked at Asn-1521. 6 disulfides stabilise this stretch: Cys-1522–Cys-1545, Cys-1527–Cys-1540, Cys-1536–Cys-1552, Cys-1559–Cys-1585, Cys-1567–Cys-1580, and Cys-1576–Cys-1592. N-linked (GlcNAc...) asparagine glycans are attached at residues Asn-1594 and Asn-1627. A helical transmembrane segment spans residues 1746–1766; that stretch reads VITGIILVIIALAFFGMVLST. Over 1767-2703 the chain is Cytoplasmic; that stretch reads QRKRAHGVTW…ANKGSEAIYI (937 aa). The segment at 1810-1850 is disordered; that stretch reads QSQGVGQPGAHWSDDESDMPLPKRQRSDPVSGVGLGNNGGY. ANK repeat units lie at residues 1901-1945, 1950-1979, 1983-2013, 2017-2046, 2050-2079, 2083-2112, and 2116-2139; these read CGLT…ELNA, TGETSLHLAARFARADAAKRLLDAGADANC, TGRTPLHAAVAADAMGVFQILLRNRATNLNA, DGTTPLILAARLAIEGMVEDLITADADINA, SGKTALHWAAAVNNTEAVNILLMHHANRDA, KDETPLFLAAREGSYEACKALLDNFANREI, and MDRLPRDVASERLHHDIVRLLDEH. Residues 2172 to 2257 are disordered; the sequence is TVISAGNGGN…LTGGVSGVPG (86 aa). Low complexity predominate over residues 2228–2238; it reads KKTSAASKKAA. Residues 2325-2328 are interaction with Nedd4; the sequence is PPSY. 4 disordered regions span residues 2399 to 2452, 2488 to 2524, 2579 to 2620, and 2632 to 2703; these read SGAG…PTSP, GGGGGGGVGQGPQNSPVSLGIISPTGSDMGIMLAPPQ, LDLN…PSSQ, and PSSQ…AIYI. A compositionally biased stretch (polar residues) spans 2414-2429; sequence PYSNQSPPHSVQSSLA. At Ser-2447 the chain carries Phosphoserine. A compositionally biased stretch (gly residues) spans 2488–2497; it reads GGGGGGGVGQ. The segment covering 2598–2619 has biased composition (low complexity); the sequence is PPSIQSSMSGSSPSTNMLSPSS. Residues 2632–2653 are compositionally biased toward polar residues; that stretch reads PSSQHSGGHTPQHLVQTLDSYP. Low complexity predominate over residues 2659–2675; it reads SPGHWSSSSPRSNSDWS. Positions 2677 to 2687 are enriched in polar residues; it reads GVQSPAANNLY.

The protein belongs to the NOTCH family. In terms of assembly, homomer. Interacts with Su(H) when activated. Interacts with Dx via its ANK repeats. Interacts with Delta via the EGF repeats and the Delta EGF repeats. Interacts with Nedd4 and Su(dx). Interacts with O-fut1; the interaction glycosylates N and transports N to early endosomes. Interacts with Akap200; the interaction stabilizes N/Notch protein levels by preventing Cbl-mediated ubiquitination and subsequent lysosomal degradation of N/Notch. Post-translationally, upon binding its ligands such as Delta or Serrate, it is cleaved (S2 cleavage) in its extracellular domain, close to the transmembrane domain. S2 cleavage is probably mediated by Kuz. It is then cleaved (S3 cleavage) downstream of its transmembrane domain, releasing it from the cell membrane. S3 cleavage requires Psn. In terms of processing, O-glycosylated. Three forms of O-glycosylation (O-fucosylation, O-glucosylation and O-GlcNAcylation) are detected. O-fucosylated by O-fut1 and fng in the EGF repeat domain inhibits both Serrate/Ser- and Delta/Dl-binding. O-glucosylation by rumi in the endoplasmic reticulum is necessary for correct folding and signaling. Ubiquitinated by various ubiquitin ligases; which promotes ligand-independent endocytosis and proteasomal degradation. Ubiquitinated by Nedd4. May also be ubiquitinated by Su(dx) and Cbl. Mono-ubiquitinated, possibly by dx/deltex; this may be involved in the ESCRT-III mediated targeting to multivesicular bodies.

The protein resides in the cell membrane. The protein localises to the endosome. Its subcellular location is the multivesicular body. It localises to the nucleus. In terms of biological role, essential signaling protein which has a major role in many developmental processes. Functions as a receptor for membrane-bound ligands Delta and Serrate to regulate cell-fate determination. Upon ligand activation, and releasing from the cell membrane, the Notch intracellular domain (NICD) forms a transcriptional activator complex with Su(H) (Suppressor of hairless) and activates genes of the E(spl) complex. Regulates oogenesis, the differentiation of the ectoderm and the development of the central and peripheral nervous system, eye, wing disk, muscles and segmental appendages such as antennae and legs, through lateral inhibition or induction. Regulates neuroblast self-renewal, identity and proliferation through the regulation of bHLH-O proteins; in larval brains, involved in the maintenance of type II neuroblast self-renewal and identity by suppressing erm expression together with pnt; might also regulate dpn expression through the activation of the transcriptional regulator Su(H). Targeted for ESCRT-mediated endosomal sequestration and lysosomal degradation by various E3 ubiquitin ligases to regulate the Notch signaling pathway. Can undergo ligand-dependent and non-canonical ligand-independent activation. Ligand-independent activation is dependent on endosome acidification and probably occurs in late endosomes or lysosome. Ectopic ligand-independent activation occurs when disruption of the endolysosomal pathway, particularly of the ESCRT-III complex, prevents sequestration of the receptor in intraluminal vesicles of multivesicular bodies. The chain is Neurogenic locus Notch protein from Drosophila melanogaster (Fruit fly).